A 357-amino-acid chain; its full sequence is tRNA pseudouridine synthase B (357 aa).

The Nucleophile role is filled by D42.

The protein belongs to the pseudouridine synthase TruB family. Type 1 subfamily.

The catalysed reaction is uridine(55) in tRNA = pseudouridine(55) in tRNA. Responsible for synthesis of pseudouridine from uracil-55 in the psi GC loop of transfer RNAs. The sequence is that of tRNA pseudouridine synthase B from Treponema denticola (strain ATCC 35405 / DSM 14222 / CIP 103919 / JCM 8153 / KCTC 15104).